We begin with the raw amino-acid sequence, 182 residues long: uncharacterized protein (182 aa).

The Macro domain occupies 1–177; that stretch reads MEFSVGGVEV…KFLEVFKKHL (177 aa).

This is an uncharacterized protein from Pyrobaculum aerophilum (strain ATCC 51768 / DSM 7523 / JCM 9630 / CIP 104966 / NBRC 100827 / IM2).